A 308-amino-acid polypeptide reads, in one-letter code: HTH-type transcriptional activator AllS (308 aa).

The HTH lysR-type domain occupies 2–59; sequence FDPETLRTFIAVAETGSFSKAAERLCKTTATISYRIKLLEENTGVALFFRTTRSVTLT. The segment at residues 19–38 is a DNA-binding region (H-T-H motif); that stretch reads FSKAAERLCKTTATISYRIK.

The protein belongs to the LysR transcriptional regulatory family.

In terms of biological role, positive regulator essential for the expression of allD operon. Binds to the allD promoter. The polypeptide is HTH-type transcriptional activator AllS (allS) (Escherichia coli O1:K1 / APEC).